Here is a 152-residue protein sequence, read N- to C-terminus: Small ribosomal subunit protein uS13 (152 aa).

Serine 2 bears the N-acetylserine mark. Lysine 91 participates in a covalent cross-link: Glycyl lysine isopeptide (Lys-Gly) (interchain with G-Cter in SUMO2). An N6-acetyllysine; alternate mark is found at lysine 94 and lysine 106. Glycyl lysine isopeptide (Lys-Gly) (interchain with G-Cter in SUMO2); alternate cross-links involve residues lysine 94 and lysine 106.

The protein belongs to the universal ribosomal protein uS13 family. In terms of assembly, component of the small ribosomal subunit.

Its subcellular location is the cytoplasm. In terms of biological role, component of the small ribosomal subunit. The ribosome is a large ribonucleoprotein complex responsible for the synthesis of proteins in the cell. This chain is Small ribosomal subunit protein uS13 (RPS18), found in Homo sapiens (Human).